Here is a 108-residue protein sequence, read N- to C-terminus: Nascent polypeptide-associated complex protein (108 aa).

One can recognise an NAC-A/B domain in the interval 1–68; that stretch reads MNPREIRRMM…LREVKKEVEQ (68 aa).

Belongs to the NAC-alpha family. As to quaternary structure, homodimer. Interacts with the ribosome. Binds ribosomal RNA.

Its function is as follows. Contacts the emerging nascent chain on the ribosome. The protein is Nascent polypeptide-associated complex protein of Picrophilus torridus (strain ATCC 700027 / DSM 9790 / JCM 10055 / NBRC 100828 / KAW 2/3).